Consider the following 206-residue polypeptide: MPKVDLFNQNGEKVGDLQLADSVFGVEVNTYAMHQVVKALLANKRQGTQSAKTRAEVSGGGIKPWRQKGTGRARQGSIRAPQWIHGGIVFAPKPRDYRMSIPKSMKKVAIKSALTSKVNEKLMVVVDDIKLETPKTKEVVKMLNAFNAKKTLIITNNAEENVYKSARNIEGVQIIPVNNINVYDILKYDKVVITKDAVSKIEEVYA.

The tract at residues 47–75 (GTQSAKTRAEVSGGGIKPWRQKGTGRARQ) is disordered.

It belongs to the universal ribosomal protein uL4 family. As to quaternary structure, part of the 50S ribosomal subunit.

One of the primary rRNA binding proteins, this protein initially binds near the 5'-end of the 23S rRNA. It is important during the early stages of 50S assembly. It makes multiple contacts with different domains of the 23S rRNA in the assembled 50S subunit and ribosome. Functionally, forms part of the polypeptide exit tunnel. This chain is Large ribosomal subunit protein uL4, found in Clostridium botulinum (strain 657 / Type Ba4).